Here is a 163-residue protein sequence, read N- to C-terminus: Disulfide bond formation protein B (163 aa).

Topologically, residues Met-1–Ile-9 are cytoplasmic. Residues Gln-10–Tyr-26 form a helical membrane-spanning segment. Topologically, residues Leu-27–Val-44 are periplasmic. Cysteines 36 and 39 form a disulfide. The chain crosses the membrane as a helical span at residues Cys-45 to Gly-58. The Cytoplasmic segment spans residues Thr-59–His-64. The chain crosses the membrane as a helical span at residues Ile-65–Leu-82. Over Arg-83–Gly-139 the chain is Periplasmic. A disulfide bond links Cys-98 and Cys-125. A helical transmembrane segment spans residues Trp-140–Arg-158. Topologically, residues Thr-159–Asn-163 are cytoplasmic.

This sequence belongs to the DsbB family.

The protein resides in the cell inner membrane. Functionally, required for disulfide bond formation in some periplasmic proteins. Acts by oxidizing the DsbA protein. This Legionella pneumophila (strain Lens) protein is Disulfide bond formation protein B.